The following is a 1481-amino-acid chain: ABC multidrug transporter atrH (1481 aa).

A compositionally biased stretch (basic and acidic residues) spans 1–10 (MALPREERSL). Disordered regions lie at residues 1 to 45 (MALP…GIEQ) and 61 to 89 (ISQTNSGTEGLNPFLNTSDPELDPNSDQF). Asparagine 19, asparagine 76, and asparagine 320 each carry an N-linked (GlcNAc...) asparagine glycan. Residues 134–396 (ATVSNVWLKA…FIEMGFDCPE (263 aa)) form the ABC transporter 1 domain. A helical membrane pass occupies residues 507–527 (MTLSTVIGNSILALIISSVFY). N-linked (GlcNAc...) asparagine glycosylation is present at asparagine 530. The next 5 membrane-spanning stretches (helical) occupy residues 542–562 (LLFFAILLNAFASALEMLTLW), 587–607 (LIVDLPAKAPVSIVFNLILYF), 616–636 (GHFFVFYLFSVTTTLTMSNVF), 650–670 (EVPASIFMMILMIYTGFTIPV), and 758–778 (FGILLGFLFFSLVAYIVASEL). Residues 838–1081 (FHWQDVCYDI…LIKYFEDKGS (244 aa)) enclose the ABC transporter 2 domain. 874 to 881 (GVTGAGKT) provides a ligand contact to ATP. Transmembrane regions (helical) follow at residues 1174 to 1194 (YIYAKAAMCIIPPLFIGFTFW), 1210 to 1230 (IFMLLVIFPNLVQQMMPYFAM), 1249 to 1269 (AFMLASIVVELPWNMLMAVPA), 1298 to 1318 (LLVLIFMLFTSTFSSMMIAGI), 1327 to 1347 (IAQLMFSMCLIFCGVLASPDV), and 1358 to 1378 (ASPFSYLVGSVLAVGIAGAPV). Asparagine 1395 carries N-linked (GlcNAc...) asparagine glycosylation. Residues 1446 to 1466 (VGILFVYIVFNTVAAVFLYWL) traverse the membrane as a helical segment.

The protein belongs to the ABC transporter superfamily. ABCG family. PDR (TC 3.A.1.205) subfamily.

It localises to the cell membrane. In terms of biological role, pleiotropic ABC efflux transporter involved in the basal level of azole susceptibility. In Aspergillus oryzae (strain ATCC 42149 / RIB 40) (Yellow koji mold), this protein is ABC multidrug transporter atrH.